Consider the following 526-residue polypeptide: Peptide chain release factor 3 (526 aa).

A tr-type G domain is found at aspartate 9–glutamine 277. Residues serine 18 to threonine 25, aspartate 86 to histidine 90, and asparagine 140 to aspartate 143 each bind GTP.

The protein belongs to the TRAFAC class translation factor GTPase superfamily. Classic translation factor GTPase family. PrfC subfamily.

The protein resides in the cytoplasm. In terms of biological role, increases the formation of ribosomal termination complexes and stimulates activities of RF-1 and RF-2. It binds guanine nucleotides and has strong preference for UGA stop codons. It may interact directly with the ribosome. The stimulation of RF-1 and RF-2 is significantly reduced by GTP and GDP, but not by GMP. This chain is Peptide chain release factor 3, found in Shewanella pealeana (strain ATCC 700345 / ANG-SQ1).